Reading from the N-terminus, the 591-residue chain is Protein NRT1/ PTR FAMILY 4.3 (591 aa).

Residues 1–10 (MAEINKQSNK) show a composition bias toward polar residues. Positions 1–38 (MAEINKQSNKWEQEEVSNENNWELAEEESVDWRGRPSN) are disordered. A run of 12 helical transmembrane segments spans residues 47–67 (AALFVLGLQAFEIMGIAAVGN), 85–105 (ANIVTNFVGTIFIFALLGGYL), 109–129 (FLGSFWTIIIFGFVELSGFIL), 157–177 (GFKAMIFFMALYLVALGSGCV), 204–224 (FNAAYFAFSMGELIALTLLVW), 233–253 (IGFGVSAAAMTMGIISLVSGT), 347–367 (LISLVPIFASTIVFNTILAQL), 395–415 (AIPYIMLIFLVPLYDSFLVPF), 429–449 (LTRIGIGLFLSTFSMVSAAML), 463–483 (ILSIFWITPQFLIFGISEMFT), 502–522 (FLMALTYCSYSFGFYFSSVLV), and 551–571 (LFYWLLAVLSLLNFLSYLFWS).

Belongs to the major facilitator superfamily. Proton-dependent oligopeptide transporter (POT/PTR) (TC 2.A.17) family. In terms of tissue distribution, expressed in flowers. Detected in roots and siliques.

It localises to the membrane. In Arabidopsis thaliana (Mouse-ear cress), this protein is Protein NRT1/ PTR FAMILY 4.3 (NPF4.3).